The chain runs to 231 residues: Fibronectin type III domain-containing protein 4 (231 aa).

The signal sequence occupies residues 1-40; the sequence is MPLAPPANSVETMASLMPLSPYLSPTVLLLVSCDLGFVRA. Over 41-163 the chain is Extracellular; sequence DRPPSPVNVT…GLDGERPLQT (123 aa). Residues 43-136 form the Fibronectin type-III domain; sequence PPSPVNVTVT…PRVHFRTLKG (94 aa). N-linked (GlcNAc...) asparagine glycans are attached at residues asparagine 48 and asparagine 143. The disordered stretch occupies residues 118-156; that stretch reads GLRGESPPGPRVHFRTLKGSDRLPSNSSSPGDITVEGLD. Residues 164-184 traverse the membrane as a helical segment; it reads GEVVIIVVVLLMWAAVIGLFC. The Cytoplasmic segment spans residues 185 to 231; sequence RQYDIIKDNDSNNNPKEKGKGPEQSPQGRPVGTTRQKKSPSINTIDV. Positions 193 to 205 are enriched in basic and acidic residues; it reads NDSNNNPKEKGKG. Residues 193–231 are disordered; sequence NDSNNNPKEKGKGPEQSPQGRPVGTTRQKKSPSINTIDV.

In terms of tissue distribution, predominantly expressed in the liver and in the brain, including in the cortex, hypothalamus and hippocampus. Also expressed in heart, lung, kidney and testis. In the colon, expressed in the epithelium and in a subset of immune cells in lymphoid aggregates.

It localises to the membrane. The protein resides in the secreted. Has anti-inflammatory properties. In the colon, acts on macrophages to down-regulate inflammation. May suppress osteoclastogenesis and mature osteoclast resorptive function. In white adipose tissue, decreases local inflammation, via interaction with GPR116. Also required for proper systemic glucose tolerance, specifically sensitizing white adipocytes to insulin and promoting glucose uptake. The insulin sensitizing function in adipose tissue is mediated by interaction with ADGRF5/GPR116 and activation of cAMP signaling. This chain is Fibronectin type III domain-containing protein 4 (Fndc4), found in Mus musculus (Mouse).